The following is a 23-amino-acid chain: Phospholipase A2 crotoxin basic chain 3 (23 aa).

Ca(2+) serves as cofactor. Contains 7 disulfide bonds. In terms of tissue distribution, expressed by the venom gland.

It is found in the secreted. It carries out the reaction a 1,2-diacyl-sn-glycero-3-phosphocholine + H2O = a 1-acyl-sn-glycero-3-phosphocholine + a fatty acid + H(+). Its function is as follows. Snake venom phospholipase A2 (PLA2) that shows presynaptic neurotoxicity. PLA2 catalyzes the calcium-dependent hydrolysis of the 2-acyl groups in 3-sn-phosphoglycerides. In Crotalus durissus terrificus (South American rattlesnake), this protein is Phospholipase A2 crotoxin basic chain 3.